Reading from the N-terminus, the 206-residue chain is High frequency lysogenization protein HflD homolog (206 aa).

Belongs to the HflD family.

The protein resides in the cytoplasm. The protein localises to the cell inner membrane. The sequence is that of High frequency lysogenization protein HflD homolog from Pseudomonas savastanoi pv. phaseolicola (strain 1448A / Race 6) (Pseudomonas syringae pv. phaseolicola (strain 1448A / Race 6)).